Consider the following 589-residue polypeptide: MSVRKNSPASPKPTSRSRESSRSPSVTDLKDHSKAKRTLCRNILLYGSCKHSENGCAFRHDGPFIPSSENLEQYSVKKKLNAASASFQPVRALPVKAAGAAVFVPKSQEKSLFLSRERTPVALSPGSHAINPYNNASMLVNEPFHDDSGVYYTRQNQFKPTLYNLYNPQPSPMPTLLPYERTVNGLFIDDTTRERIERKSEASRQTISALPSIISSYTSLAPLNTKLYRYKEQIGFSSWTYKCTSSIDGNAYVLKRLQDCSINIDTSTVDKLKNVFHPNIVPFHSAFHTDTFHDSSLLLIYDFYPCTTTLGELYLNNSKNSVKLEENRKIPERELWNYFFQLTIALSYLHKSGFACNKLTPSRILVDQTERIRISGCADYELVVSNKPPLEERKKQDFVDLGVVIANLATGRTDMDMSSAARAIYSTYSREFYKAVLYFVSEVPEDKNLELFLQNHIESFFPIMSSPYVECEKMERKISDAFQHGRFFNILCKIMFIIDNNRASREYPIAREKEISLIYLLRDYLFHQIDEDECPVIDLYQVLNRLGKLDAGINQAIALISRDELDCVSVSYGELKAWLDNVYEMEINS.

Residues 1–32 (MSVRKNSPASPKPTSRSRESSRSPSVTDLKDH) form a disordered region. A C3H1-type zinc finger spans residues 34–63 (KAKRTLCRNILLYGSCKHSENGCAFRHDGP). A PABPC-interacting motif-2 (PAM-2) motif is present at residues 74-94 (YSVKKKLNAASASFQPVRALP). Residues 201–457 (EASRQTISAL…NLELFLQNHI (257 aa)) form a pseudokinase domain region. Residues Lys-255 and 302–309 (DFYPCTTT) contribute to the ATP site. Residues 458–496 (ESFFPIMSSPYVECEKMERKISDAFQHGRFFNILCKIMF) adopt a coiled-coil conformation. The segment at 497-589 (IIDNNRASRE…DNVYEMEINS (93 aa)) is knob domain.

It belongs to the protein kinase superfamily. PAN3 family. As to quaternary structure, homodimer. Forms a heterotrimer with a catalytic subunit pan2 to form the poly(A)-nuclease (PAN) deadenylation complex. Interacts (via PAM-2 motif) with poly(A)-binding protein pab1 (via PABC domain), conferring substrate specificity of the enzyme complex.

The protein localises to the cytoplasm. Its subcellular location is the nucleus. Its function is as follows. Regulatory subunit of the poly(A)-nuclease (PAN) deadenylation complex, one of two cytoplasmic mRNA deadenylases involved in mRNA turnover. PAN specifically shortens poly(A) tails of RNA and the activity is stimulated by poly(A)-binding protein pab1. PAN deadenylation is followed by rapid degradation of the shortened mRNA tails by the CCR4-NOT complex. Deadenylated mRNAs are then degraded by two alternative mechanisms, namely exosome-mediated 3'-5' exonucleolytic degradation, or deadenylation-dependent mRNA decaping and subsequent 5'-3' exonucleolytic degradation by xrn1. May also be involved in post-transcriptional maturation of mRNA poly(A) tails. ppk26/pan3 acts as a positive regulator for PAN activity, recruiting the catalytic subunit pan2 to mRNA via its interaction with RNA and with pab1. In Schizosaccharomyces pombe (strain 972 / ATCC 24843) (Fission yeast), this protein is PAN2-PAN3 deadenylation complex subunit pan3 (ppk26).